The primary structure comprises 505 residues: L-arabinose isomerase (505 aa).

The Mn(2+) site is built by E310, E337, H354, and H453.

Belongs to the arabinose isomerase family. Mn(2+) serves as cofactor.

The catalysed reaction is beta-L-arabinopyranose = L-ribulose. It participates in carbohydrate degradation; L-arabinose degradation via L-ribulose; D-xylulose 5-phosphate from L-arabinose (bacterial route): step 1/3. Its function is as follows. Catalyzes the conversion of L-arabinose to L-ribulose. The chain is L-arabinose isomerase from Clavibacter sepedonicus (Clavibacter michiganensis subsp. sepedonicus).